The following is a 355-amino-acid chain: MNTRSGDAEGDIRGKMIAPVRDGNGGQKRKLVQSNDIQRDEDGGAKRRIIQSSDQKNGKILRGIHGCVSPRCSAPTYQSRFSWYEQDIWTYITRFLDGKSLVKLGATNKWFYKIAMEDTVWRFACLRDLQVPETFPVSSTWIKIYASAFDGSHSYLFHQKEKHIDWMRLGAFVLDSRTSFLTESLSGRLKVPTEGTIEQMLQSSGSCLINDIKSGIWIADLQLLRCPLCDLSTCDGTMQTLDVRHIELFLSEGYKDGSWDYNLIGSHKLEKDASAACGAIFDLKHLKKSSSSGILNLKSWTGEADDSQPKAVIAPHAVAVHTRLQQNEGILVKYHTMKAGTDGDIVSIRISQQLL.

Over residues 1 to 14 (MNTRSGDAEGDIRG) the composition is skewed to basic and acidic residues. A disordered region spans residues 1-44 (MNTRSGDAEGDIRGKMIAPVRDGNGGQKRKLVQSNDIQRDEDGG). In terms of domain architecture, F-box; degenerate spans 78–124 (QSRFSWYEQDIWTYITRFLDGKSLVKLGATNKWFYKIAMEDTVWRFA).

This chain is Probable F-box protein At5g36000, found in Arabidopsis thaliana (Mouse-ear cress).